Here is a 668-residue protein sequence, read N- to C-terminus: MTAFDLHAPFVPKGDQPQAIEKLTTHLQSGHSRQTLLGATGTGKTFTMAKVIEEIGKPTLILAHNKTLAAQLCNEIRSFFPNNAVEYFISYYDYYQPEAYIPVTDTFIEKTASINEEIDMLRHSATRSLFERQDVIVVASISCIYGLGIPAEYLKASIPLKVGAEVDQRQLLRNLAAVQYTRNDVDLGRGRFRVKGDVLEIGPAYEDRIIRVEFFGDEIDAIRYVDPVTGETLQSLEGLNVYPARHFVTPTERLEMAVEAIDAERTAQVEHLEGAGKLLEAQRLNQRTRYDLEMLREVGYCNGVENYSRHLAGRQAGEPPECLVDYFPKDWLLIVDESHVTVPQIRGMYNGDQARKKVLIDHGFRLPSAADNRPLKSEEFWQKVGQCVFVSATPGLWEIELSENRVVEQVIRPTGVVDPEIFVRPTTGQVDDLLAEIQERVGRQERTLITTLTKRMAEDLTEYFEERGVRVRYLHSEINAIQRIEILRDLREGVFDVLIGVNLLREGLDLPEVSLVAILDADKEGFLRAERSLIQTIGRAARHVRGQAILYADNLTDSMEKAISETERRRKIQLAYNKKHGITPQPVKKGSDNAILAFLEVSRRLNTQELEDAYEQADDLPLESVPELITQLEAQMKEAAKNLEFEEAAKYRDRIKNLRSKLLGQQSP.

Residues 25–176 form the Helicase ATP-binding domain; the sequence is THLQSGHSRQ…DQRQLLRNLA (152 aa). An ATP-binding site is contributed by 38-45; sequence GATGTGKT. The short motif at 91-114 is the Beta-hairpin element; the sequence is YYDYYQPEAYIPVTDTFIEKTASI. Positions 429 to 591 constitute a Helicase C-terminal domain; it reads QVDDLLAEIQ…ITPQPVKKGS (163 aa). In terms of domain architecture, UVR spans 626–661; sequence PELITQLEAQMKEAAKNLEFEEAAKYRDRIKNLRSK.

The protein belongs to the UvrB family. As to quaternary structure, forms a heterotetramer with UvrA during the search for lesions. Interacts with UvrC in an incision complex.

Its subcellular location is the cytoplasm. The UvrABC repair system catalyzes the recognition and processing of DNA lesions. A damage recognition complex composed of 2 UvrA and 2 UvrB subunits scans DNA for abnormalities. Upon binding of the UvrA(2)B(2) complex to a putative damaged site, the DNA wraps around one UvrB monomer. DNA wrap is dependent on ATP binding by UvrB and probably causes local melting of the DNA helix, facilitating insertion of UvrB beta-hairpin between the DNA strands. Then UvrB probes one DNA strand for the presence of a lesion. If a lesion is found the UvrA subunits dissociate and the UvrB-DNA preincision complex is formed. This complex is subsequently bound by UvrC and the second UvrB is released. If no lesion is found, the DNA wraps around the other UvrB subunit that will check the other stand for damage. The polypeptide is UvrABC system protein B (Acaryochloris marina (strain MBIC 11017)).